A 952-amino-acid polypeptide reads, in one-letter code: Ubiquitin carboxyl-terminal hydrolase CYLD (952 aa).

The tract at residues 106-589 is interaction with TRIP; the sequence is CEERLSLFRN…LEIMIGKKKG (484 aa). CAP-Gly domains follow at residues 153–198 and 253–286; these read LAER…VFVA and DVLP…VQLC. Residues 311 to 350 are disordered; sequence RRPPKLAFMSRGVGDKGSSSHNKPKVTGSTSDPGSRNRSE. A compositionally biased stretch (polar residues) spans 327 to 346; it reads GSSSHNKPKVTGSTSDPGSR. At serine 383 the chain carries Phosphoserine. The segment at 386–409 is disordered; the sequence is EMSSDFGHSSPPPQPPSMNSLSSE. Residues 390–465 are interaction with TRAF2; the sequence is DFGHSSPPPQ…LPISSGNAHG (76 aa). 2 positions are modified to phosphoserine: serine 414 and serine 418. Residues 466 to 680 are interaction with IKBKG/NEMO; sequence LEVGSLAEVK…FTSEEKDPEE (215 aa). The CAP-Gly 3 domain occupies 488–531; it reads GQPPGLSDVLAGLELEDECAGCTDGTFRGTRYFTCALKKALFVK. One can recognise a USP domain in the interval 588-946; the sequence is KGIQGHYNSC…DAYMCMYQSP (359 aa). Cysteine 597 serves as the catalytic Nucleophile. Residues 777–829 form a B-box region; the sequence is LEDTPRQCRICGGLAMYECRECYDDPDISAGKIKQFCKTCSTQVHLHPRRLNH. Positions 784, 787, 795, 798, 813, 816, 821, and 829 each coordinate Zn(2+). The Proton acceptor role is filled by histidine 867.

Belongs to the peptidase C19 family. Interacts (via CAP-Gly domain) with IKBKG/NEMO (via proline-rich C-terminal region). Interacts with TRAF2 and TRIP. Interacts with PLK1, DVL1, DVL3, MAVS, TBK1, IKKE and RIGI. Interacts (via CAP-Gly domain) with microtubules. Interacts with HDAC6 and BCL3. Interacts with MAP3K7. Identified in a complex with TRAF6 and SQSTM1. Interacts with OPTN and SQSTM1. Interacts with CEP350. Interacts with RNF31; the interaction is indirect and is mediated via SPATA2. Interacts with SPATA2 (via the PUB domain); the interaction is direct and recruits CYLD to the LUBAC complex, thereby regulating TNF-alpha-induced necroptosis. Post-translationally, phosphorylated on several serine residues by IKKA and/or IKKB in response to immune stimuli. Phosphorylation requires IKBKG. Phosphorylation abolishes TRAF2 deubiquitination, interferes with the activation of Jun kinases, and strongly reduces CD40-dependent gene activation by NF-kappa-B. In terms of processing, ubiquitinated. Polyubiquitinated in hepatocytes treated with palmitic acid. Ubiquitination is mediated by E3 ligase TRIM47 and leads to proteasomal degradation.

Its subcellular location is the cytoplasm. It localises to the perinuclear region. The protein localises to the cytoskeleton. The protein resides in the cell membrane. It is found in the microtubule organizing center. Its subcellular location is the centrosome. It localises to the spindle. The protein localises to the cilium basal body. It carries out the reaction Thiol-dependent hydrolysis of ester, thioester, amide, peptide and isopeptide bonds formed by the C-terminal Gly of ubiquitin (a 76-residue protein attached to proteins as an intracellular targeting signal).. Deubiquitinase that specifically cleaves 'Lys-63'- and linear 'Met-1'-linked polyubiquitin chains and is involved in NF-kappa-B activation and TNF-alpha-induced necroptosis. Negatively regulates NF-kappa-B activation by deubiquitinating upstream signaling factors. Contributes to the regulation of cell survival, proliferation and differentiation via its effects on NF-kappa-B activation. Negative regulator of Wnt signaling. Inhibits HDAC6 and thereby promotes acetylation of alpha-tubulin and stabilization of microtubules. Plays a role in the regulation of microtubule dynamics, and thereby contributes to the regulation of cell proliferation, cell polarization, cell migration, and angiogenesis. Required for normal cell cycle progress and normal cytokinesis. Inhibits nuclear translocation of NF-kappa-B. Plays a role in the regulation of inflammation and the innate immune response, via its effects on NF-kappa-B activation. Dispensable for the maturation of intrathymic natural killer cells, but required for the continued survival of immature natural killer cells. Negatively regulates TNFRSF11A signaling and osteoclastogenesis. Involved in the regulation of ciliogenesis, allowing ciliary basal bodies to migrate and dock to the plasma membrane; this process does not depend on NF-kappa-B activation. Ability to remove linear ('Met-1'-linked) polyubiquitin chains regulates innate immunity and TNF-alpha-induced necroptosis: recruited to the LUBAC complex via interaction with SPATA2 and restricts linear polyubiquitin formation on target proteins. Regulates innate immunity by restricting linear polyubiquitin formation on RIPK2 in response to NOD2 stimulation. Involved in TNF-alpha-induced necroptosis by removing linear ('Met-1'-linked) polyubiquitin chains from RIPK1, thereby regulating the kinase activity of RIPK1. Negatively regulates intestinal inflammation by removing 'Lys-63' linked polyubiquitin chain of NLRP6, thereby reducing the interaction between NLRP6 and PYCARD/ASC and formation of the NLRP6 inflammasome. Does not catalyze deubiquitination of heterotypic 'Lys-63'-/'Lys-48'-linked branched ubiquitin chains. Removes 'Lys-63' linked polyubiquitin chain of MAP3K7, which inhibits phosphorylation and blocks downstream activation of the JNK-p38 kinase cascades. Also removes 'Lys-63'-linked polyubiquitin chains of MAP3K1 and MA3P3K3, which inhibit their interaction with MAP2K1 and MAP2K2. This Mus musculus (Mouse) protein is Ubiquitin carboxyl-terminal hydrolase CYLD (Cyld).